We begin with the raw amino-acid sequence, 172 residues long: Putative phosphoesterase BC_1225 (172 aa).

H34 acts as the Proton donor in catalysis. 2 short sequence motifs (HXTX) span residues 34–37 and 115–118; these read HITL and HLTI. H115 acts as the Proton acceptor in catalysis.

This sequence belongs to the 2H phosphoesterase superfamily. YjcG family.

In Bacillus cereus (strain ATCC 14579 / DSM 31 / CCUG 7414 / JCM 2152 / NBRC 15305 / NCIMB 9373 / NCTC 2599 / NRRL B-3711), this protein is Putative phosphoesterase BC_1225.